The sequence spans 862 residues: Protein translocase subunit SecA (862 aa).

ATP-binding positions include Gln86, Gly104–Thr108, and Asp499. Positions 848, 850, 859, and 860 each coordinate Zn(2+).

The protein belongs to the SecA family. As to quaternary structure, monomer and homodimer. Part of the essential Sec protein translocation apparatus which comprises SecA, SecYEG and auxiliary proteins SecDF-YajC and YidC. Requires Zn(2+) as cofactor.

Its subcellular location is the cell inner membrane. The protein resides in the cytoplasm. It catalyses the reaction ATP + H2O + cellular proteinSide 1 = ADP + phosphate + cellular proteinSide 2.. Part of the Sec protein translocase complex. Interacts with the SecYEG preprotein conducting channel. Has a central role in coupling the hydrolysis of ATP to the transfer of proteins into and across the cell membrane, serving both as a receptor for the preprotein-SecB complex and as an ATP-driven molecular motor driving the stepwise translocation of polypeptide chains across the membrane. This Ehrlichia canis (strain Jake) protein is Protein translocase subunit SecA.